Here is a 75-residue protein sequence, read N- to C-terminus: CLAVATA3/ESR (CLE)-related protein 33 (75 aa).

The first 22 residues, 1 to 22, serve as a signal peptide directing secretion; sequence MASWRMLCFVLLFTSILICHDA. 2 positions are modified to hydroxyproline: Pro-67 and Pro-70. O-linked (Ara...) hydroxyproline glycosylation occurs at Pro-70.

Belongs to the CLV3/ESR signal peptide family. Post-translationally, the O-glycosylation (arabinosylation) of the hydroxyproline Pro-70 enhances binding affinity of the CLE33p peptide for its receptor. As to expression, expressed in root vasculature.

It is found in the secreted. It localises to the extracellular space. Signaling peptide involved in the regulation of root colonization by arbuscular mycorrhizal (AM) fungi. Moves from root to shoot to function with the receptor kinase SUNN, in a signaling pathway that repress strigolactone biosynthetic genes and strigolactone content in the roots, and consequently reduces the promotion of further colonization by AM fungi. This Medicago truncatula (Barrel medic) protein is CLAVATA3/ESR (CLE)-related protein 33.